The primary structure comprises 414 residues: Secreted beta-glucosidase sun1 (414 aa).

Positions 1 to 19 are cleaved as a signal peptide; the sequence is MKFNTVALTLATAGSLVTA. Residue asparagine 80 is glycosylated (N-linked (GlcNAc...) asparagine). Positions 115-140 are enriched in low complexity; that stretch reads TSASSSETVQTPAASSSSASSSSTAT. The disordered stretch occupies residues 115 to 141; the sequence is TSASSSETVQTPAASSSSASSSSTATG. An N-linked (GlcNAc...) asparagine glycan is attached at asparagine 377.

It belongs to the SUN family. Post-translationally, highly glycosylated.

The protein localises to the secreted. It is found in the cell wall. Its function is as follows. Cell surface beta-glucosidase involved in cell wall biosynthesis and septation, and thus required for normal growth and correct hyphal morphogenesis. Has hydrolytic activity on linear (1-&gt;3)-beta-D-glucans such as laminaribiose and other laminarioligosaccharides. Also has a minor transferase activity. The chain is Secreted beta-glucosidase sun1 (sun1) from Aspergillus fumigatus (strain ATCC MYA-4609 / CBS 101355 / FGSC A1100 / Af293) (Neosartorya fumigata).